The following is a 473-amino-acid chain: Argininosuccinate lyase (473 aa).

Ala-2 carries the post-translational modification N-acetylalanine. The residue at position 7 (Lys-7) is an N6-acetyllysine. 2-(N(omega)-L-arginino)succinate is bound at residue Ser-27. Lys-69 is subject to N6-acetyllysine. 2-(N(omega)-L-arginino)succinate contacts are provided by Asn-114 and Thr-159. The active-site Proton acceptor is the His-160. The active-site Proton donor is Ser-281. Lys-288 carries the post-translational modification N6-acetyllysine. Positions 289, 321, 326, and 329 each coordinate 2-(N(omega)-L-arginino)succinate.

The protein belongs to the lyase 1 family. Argininosuccinate lyase subfamily. Homotetramer. Forms tissue-specific complexes with ASS1, SLC7A1, HSP90AA1 and nitric oxide synthase NOS1, NOS2 or NOS3; the complex maintenance is independent of ASL catalytic function. Post-translationally, acetylation modifies enzyme activity in response to alterations of extracellular nutrient availability. Acetylation increased with trichostin A (TSA) or with nicotinamide (NAM). Glucose increases acetylation by about a factor of 3 with decreasing enzyme activity. Acetylation on Lys-288 is decreased on the addition of extra amino acids resulting in activation of enzyme activity.

It catalyses the reaction 2-(N(omega)-L-arginino)succinate = fumarate + L-arginine. It functions in the pathway amino-acid biosynthesis; L-arginine biosynthesis; L-arginine from L-ornithine and carbamoyl phosphate: step 3/3. Its pathway is nitrogen metabolism; urea cycle; L-arginine and fumarate from (N(omega)-L-arginino)succinate: step 1/1. Enzyme activity is regulated by acetylation. Catalyzes the reversible cleavage of L-argininosuccinate to fumarate and L-arginine, an intermediate step reaction in the urea cycle mostly providing for hepatic nitrogen detoxification into excretable urea as well as de novo L-arginine synthesis in nonhepatic tissues. Essential regulator of intracellular and extracellular L-arginine pools. As part of citrulline-nitric oxide cycle, forms tissue-specific multiprotein complexes with argininosuccinate synthase ASS1, transport protein SLC7A1 and nitric oxide synthase NOS1, NOS2 or NOS3, allowing for cell-autonomous L-arginine synthesis while channeling extracellular L-arginine to nitric oxide synthesis pathway. This chain is Argininosuccinate lyase (ASL), found in Bos taurus (Bovine).